The following is a 208-amino-acid chain: Uracil phosphoribosyltransferase (208 aa).

Residues Arg-78, Arg-103, and 130–138 (DPMLATGGS) contribute to the 5-phospho-alpha-D-ribose 1-diphosphate site. Residues Ile-193 and 198-200 (GDA) contribute to the uracil site. Asp-199 contributes to the 5-phospho-alpha-D-ribose 1-diphosphate binding site.

This sequence belongs to the UPRTase family. The cofactor is Mg(2+).

It carries out the reaction UMP + diphosphate = 5-phospho-alpha-D-ribose 1-diphosphate + uracil. Its pathway is pyrimidine metabolism; UMP biosynthesis via salvage pathway; UMP from uracil: step 1/1. Its activity is regulated as follows. Allosterically activated by GTP. In terms of biological role, catalyzes the conversion of uracil and 5-phospho-alpha-D-ribose 1-diphosphate (PRPP) to UMP and diphosphate. The polypeptide is Uracil phosphoribosyltransferase (Shewanella baltica (strain OS223)).